A 216-amino-acid polypeptide reads, in one-letter code: ATP-dependent Clp protease proteolytic subunit (216 aa).

The active-site Nucleophile is the Ser-120. His-145 is an active-site residue.

Belongs to the peptidase S14 family. As to quaternary structure, fourteen ClpP subunits assemble into 2 heptameric rings which stack back to back to give a disk-like structure with a central cavity, resembling the structure of eukaryotic proteasomes.

The protein localises to the cytoplasm. It catalyses the reaction Hydrolysis of proteins to small peptides in the presence of ATP and magnesium. alpha-casein is the usual test substrate. In the absence of ATP, only oligopeptides shorter than five residues are hydrolyzed (such as succinyl-Leu-Tyr-|-NHMec, and Leu-Tyr-Leu-|-Tyr-Trp, in which cleavage of the -Tyr-|-Leu- and -Tyr-|-Trp bonds also occurs).. Functionally, cleaves peptides in various proteins in a process that requires ATP hydrolysis. Has a chymotrypsin-like activity. Plays a major role in the degradation of misfolded proteins. This is ATP-dependent Clp protease proteolytic subunit from Cupriavidus pinatubonensis (strain JMP 134 / LMG 1197) (Cupriavidus necator (strain JMP 134)).